A 573-amino-acid polypeptide reads, in one-letter code: Urease subunit alpha (573 aa).

The Urease domain maps to 136-573 (GGIDCHVHFI…LPMAQRYFLF (438 aa)). Ni(2+)-binding residues include histidine 141, histidine 143, and lysine 224. Lysine 224 carries the N6-carboxylysine modification. Residue histidine 226 participates in substrate binding. Ni(2+)-binding residues include histidine 253 and histidine 279. The active-site Proton donor is the histidine 327. Position 367 (aspartate 367) interacts with Ni(2+).

This sequence belongs to the metallo-dependent hydrolases superfamily. Urease alpha subunit family. In terms of assembly, heterotrimer of UreA (gamma), UreB (beta) and UreC (alpha) subunits. Three heterotrimers associate to form the active enzyme. Ni cation serves as cofactor. In terms of processing, carboxylation allows a single lysine to coordinate two nickel ions.

Its subcellular location is the cytoplasm. It carries out the reaction urea + 2 H2O + H(+) = hydrogencarbonate + 2 NH4(+). It participates in nitrogen metabolism; urea degradation; CO(2) and NH(3) from urea (urease route): step 1/1. The polypeptide is Urease subunit alpha (Rhodococcus opacus (strain B4)).